Reading from the N-terminus, the 300-residue chain is Tyrosine recombinase XerC (300 aa).

In terms of domain architecture, Core-binding (CB) spans 2 to 88 (TQEGKLEQQF…SLRSFYTFLL (87 aa)). The 186-residue stretch at 109–294 (RLPKFFYSEE…TKEHLKSTYM (186 aa)) folds into the Tyr recombinase domain. Active-site residues include arginine 150, lysine 174, histidine 246, arginine 249, and histidine 272. Residue tyrosine 281 is the O-(3'-phospho-DNA)-tyrosine intermediate of the active site.

It belongs to the 'phage' integrase family. XerC subfamily. In terms of assembly, forms a cyclic heterotetrameric complex composed of two molecules of XerC and two molecules of XerD.

It localises to the cytoplasm. Site-specific tyrosine recombinase, which acts by catalyzing the cutting and rejoining of the recombining DNA molecules. The XerC-XerD complex is essential to convert dimers of the bacterial chromosome into monomers to permit their segregation at cell division. It also contributes to the segregational stability of plasmids. The chain is Tyrosine recombinase XerC from Listeria monocytogenes serotype 4a (strain HCC23).